The sequence spans 954 residues: Valine--tRNA ligase (954 aa).

The short motif at 48-58 (PNVTGSLHMGH) is the 'HIGH' region element. A 'KMSKS' region motif is present at residues 560–564 (KMSKS). Lysine 563 contacts ATP. The stretch at 886–954 (INKDTELARL…RAQYLSIENL (69 aa)) forms a coiled coil.

This sequence belongs to the class-I aminoacyl-tRNA synthetase family. ValS type 1 subfamily. In terms of assembly, monomer.

The protein resides in the cytoplasm. It carries out the reaction tRNA(Val) + L-valine + ATP = L-valyl-tRNA(Val) + AMP + diphosphate. Catalyzes the attachment of valine to tRNA(Val). As ValRS can inadvertently accommodate and process structurally similar amino acids such as threonine, to avoid such errors, it has a 'posttransfer' editing activity that hydrolyzes mischarged Thr-tRNA(Val) in a tRNA-dependent manner. The polypeptide is Valine--tRNA ligase (Mannheimia succiniciproducens (strain KCTC 0769BP / MBEL55E)).